The chain runs to 836 residues: Exonuclease 1 (836 aa).

Positions 1-99 (MGIQGLLPQL…TKRERSRKEN (99 aa)) are N-domain. The Mg(2+) site is built by D30 and D78. The segment at 82–108 (LPMKGDQETKRERSRKENLERAKEHES) is disordered. The segment covering 84 to 108 (MKGDQETKRERSRKENLERAKEHES) has biased composition (basic and acidic residues). An I-domain region spans residues 138 to 230 (KQEKVDYIVA…ILSGCDYLPS (93 aa)). 5 residues coordinate Mg(2+): E150, D152, D171, D173, and D226. Disordered regions lie at residues 464-488 (RDDS…DPDI), 568-641 (EDEC…TNSE), and 744-836 (TASA…TSRS). The segment covering 568–577 (EDECHDEDNC) has biased composition (acidic residues). 2 stretches are compositionally biased toward polar residues: residues 578–592 (ETGN…QRSS) and 744–758 (TASA…TSKA).

Belongs to the XPG/RAD2 endonuclease family. EXO1 subfamily. Mg(2+) is required as a cofactor.

Its subcellular location is the nucleus. In terms of biological role, putative 5'-&gt;3' double-stranded DNA exonuclease which may also contain a cryptic 3'-&gt;5' double-stranded DNA exonuclease activity. May be involved in DNA mismatch repair (MMR). This chain is Exonuclease 1 (EXO1), found in Oryza sativa subsp. japonica (Rice).